The chain runs to 200 residues: Somatotropin (200 aa).

The first 22 residues, 1 to 22 (MARVLVVLSVVVASLFFSQGAT), serve as a signal peptide directing secretion. Position 38 (histidine 38) interacts with Zn(2+). A disulfide bond links cysteine 71 and cysteine 173. Glutamate 182 is a Zn(2+) binding site. Cysteine 190 and cysteine 198 form a disulfide bridge.

Belongs to the somatotropin/prolactin family.

It localises to the secreted. Growth hormone plays an important role in growth control and is involved in the regulation of several anabolic processes. Implicated as an osmoregulatory substance important for seawater adaptation. The protein is Somatotropin (gh) of Pangasianodon gigas (Mekong giant catfish).